Reading from the N-terminus, the 358-residue chain is Peptide chain release factor 1 (358 aa).

At Gln-233 the chain carries N5-methylglutamine.

It belongs to the prokaryotic/mitochondrial release factor family. Post-translationally, methylated by PrmC. Methylation increases the termination efficiency of RF1.

The protein resides in the cytoplasm. Peptide chain release factor 1 directs the termination of translation in response to the peptide chain termination codons UAG and UAA. This chain is Peptide chain release factor 1, found in Macrococcus caseolyticus (strain JCSC5402) (Macrococcoides caseolyticum).